The primary structure comprises 562 residues: Arginine--tRNA ligase (562 aa).

The 'HIGH' region motif lies at alanine 129–histidine 139.

This sequence belongs to the class-I aminoacyl-tRNA synthetase family. Monomer.

Its subcellular location is the cytoplasm. The enzyme catalyses tRNA(Arg) + L-arginine + ATP = L-arginyl-tRNA(Arg) + AMP + diphosphate. The polypeptide is Arginine--tRNA ligase (Stenotrophomonas maltophilia (strain K279a)).